A 394-amino-acid chain; its full sequence is NADH dehydrogenase [ubiquinone] iron-sulfur protein 2 (394 aa).

The span at 1–16 (MTTKNRQIKNFTSNFG) shows a compositional bias: polar residues. Positions 1–22 (MTTKNRQIKNFTSNFGPQHPAA) are disordered.

It belongs to the complex I 49 kDa subunit family. In terms of assembly, complex I is composed of about 45 different subunits. This is a component of the iron-sulfur (IP) fragment of the enzyme.

The protein localises to the mitochondrion. It carries out the reaction a ubiquinone + NADH + 5 H(+)(in) = a ubiquinol + NAD(+) + 4 H(+)(out). Its function is as follows. Core subunit of the mitochondrial membrane respiratory chain NADH dehydrogenase (Complex I) that is believed to belong to the minimal assembly required for catalysis. Complex I functions in the transfer of electrons from NADH to the respiratory chain. The immediate electron acceptor for the enzyme is believed to be ubiquinone. Component of the iron-sulfur (IP) fragment of the enzyme. The protein is NADH dehydrogenase [ubiquinone] iron-sulfur protein 2 (NAD7) of Nicotiana sylvestris (Wood tobacco).